We begin with the raw amino-acid sequence, 297 residues long: GATA transcription factor 24 (297 aa).

The 36-residue stretch at 73 to 108 (GIENGDQLTLSFQGQVYVFDRVSPEKVQAVLLLLGG) folds into the Tify domain. Positions 143–185 (RLASLLRFREKRKGRNFDKTIRYTVRKEVALRMQRKKGQFTSA) constitute a CCT domain. A disordered region spans residues 178–203 (KKGQFTSAKSSNDDSGSTGSDWGSNQ). Residues 190–201 (DDSGSTGSDWGS) show a composition bias toward low complexity. The segment at 213 to 269 (QKPEVLCRHCGTSEKSTPMMRRGPDGPRTLCNACGLMWANKGTLRDLSKVPPPQTPQ) adopts a GATA-type zinc-finger fold.

It belongs to the type IV zinc-finger family. Class C subfamily. Predominantly expressed in shoot apices, inflorescences and roots.

The protein localises to the nucleus. Transcriptional activator that specifically binds 5'-GATA-3' or 5'-GAT-3' motifs within gene promoters. The sequence is that of GATA transcription factor 24 (GATA24) from Arabidopsis thaliana (Mouse-ear cress).